Here is a 551-residue protein sequence, read N- to C-terminus: Dihydroxy-acid dehydratase (551 aa).

Aspartate 78 is a Mg(2+) binding site. Cysteine 119 serves as a coordination point for [2Fe-2S] cluster. 2 residues coordinate Mg(2+): aspartate 120 and lysine 121. Position 121 is an N6-carboxylysine (lysine 121). [2Fe-2S] cluster is bound at residue cysteine 191. Glutamate 441 contacts Mg(2+). The active-site Proton acceptor is serine 467.

It belongs to the IlvD/Edd family. As to quaternary structure, homodimer. Requires [2Fe-2S] cluster as cofactor. Mg(2+) is required as a cofactor.

It catalyses the reaction (2R)-2,3-dihydroxy-3-methylbutanoate = 3-methyl-2-oxobutanoate + H2O. The catalysed reaction is (2R,3R)-2,3-dihydroxy-3-methylpentanoate = (S)-3-methyl-2-oxopentanoate + H2O. It functions in the pathway amino-acid biosynthesis; L-isoleucine biosynthesis; L-isoleucine from 2-oxobutanoate: step 3/4. It participates in amino-acid biosynthesis; L-valine biosynthesis; L-valine from pyruvate: step 3/4. Functions in the biosynthesis of branched-chain amino acids. Catalyzes the dehydration of (2R,3R)-2,3-dihydroxy-3-methylpentanoate (2,3-dihydroxy-3-methylvalerate) into 2-oxo-3-methylpentanoate (2-oxo-3-methylvalerate) and of (2R)-2,3-dihydroxy-3-methylbutanoate (2,3-dihydroxyisovalerate) into 2-oxo-3-methylbutanoate (2-oxoisovalerate), the penultimate precursor to L-isoleucine and L-valine, respectively. The polypeptide is Dihydroxy-acid dehydratase (Pyrococcus abyssi (strain GE5 / Orsay)).